The chain runs to 453 residues: Ribosomal protein uS12 methylthiotransferase RimO (453 aa).

An MTTase N-terminal domain is found at 5–120 (PKVGFVSLGC…VMQAVHSHLP (116 aa)). Positions 14, 50, 79, 151, 155, and 158 each coordinate [4Fe-4S] cluster. The region spanning 137–382 (LTPRHYAYLK…MEVAEEVSAR (246 aa)) is the Radical SAM core domain. One can recognise a TRAM domain in the interval 385–453 (ARKVGKTLKV…ADGHDLWGEV (69 aa)).

The protein belongs to the methylthiotransferase family. RimO subfamily. The cofactor is [4Fe-4S] cluster.

It is found in the cytoplasm. It carries out the reaction L-aspartate(89)-[ribosomal protein uS12]-hydrogen + (sulfur carrier)-SH + AH2 + 2 S-adenosyl-L-methionine = 3-methylsulfanyl-L-aspartate(89)-[ribosomal protein uS12]-hydrogen + (sulfur carrier)-H + 5'-deoxyadenosine + L-methionine + A + S-adenosyl-L-homocysteine + 2 H(+). Functionally, catalyzes the methylthiolation of an aspartic acid residue of ribosomal protein uS12. The chain is Ribosomal protein uS12 methylthiotransferase RimO from Burkholderia multivorans (strain ATCC 17616 / 249).